Reading from the N-terminus, the 155-residue chain is MYFKKKYIGLIDKNCEKKILDDCTTIKICYILIGILIGTNMITLIYNFIFWDHYMTCNKKDKMFYCPKDWVGYNNVCYYFNNDSKNYTTATNSCKQLNSTLANNDTNLLNLTKVYHHDKLYWVNYSLNDNFSLSLRNSTYEKRSKYLPLLFICSK.

The Cytoplasmic segment spans residues 1–30; the sequence is MYFKKKYIGLIDKNCEKKILDDCTTIKICY. A helical membrane pass occupies residues 31-51; it reads ILIGILIGTNMITLIYNFIFW. Topologically, residues 52–155 are extracellular; sequence DHYMTCNKKD…YLPLLFICSK (104 aa). C66 and C77 are oxidised to a cystine. Residues 66–154 are lectin-like; it reads CPKDWVGYNN…KYLPLLFICS (89 aa). N-linked (GlcNAc...) asparagine; by host glycosylation is found at N82, N86, N98, N104, N110, N124, N130, and N137. The cysteines at positions 94 and 153 are disulfide-linked.

This sequence belongs to the asfivirus lectin-like protein family. As to quaternary structure, homodimer.

The protein localises to the host endoplasmic reticulum membrane. Down-regulates MHC-I expression by impairing the appropriate configuration or presentation into the plasma membrane of the latter. Participates in viral hemadsorption, which may help viral spread. Reduces the transactivating activity of host TP53, thus inhibiting apoptosis. Non-essential for virus growth in swine macrophage cell cultures. The polypeptide is Lectin-like protein EP153R (Ornithodoros (relapsing fever ticks)).